The chain runs to 462 residues: Proline--tRNA ligase (462 aa).

It belongs to the class-II aminoacyl-tRNA synthetase family. ProS type 3 subfamily. As to quaternary structure, homodimer.

It is found in the cytoplasm. It catalyses the reaction tRNA(Pro) + L-proline + ATP = L-prolyl-tRNA(Pro) + AMP + diphosphate. In terms of biological role, catalyzes the attachment of proline to tRNA(Pro) in a two-step reaction: proline is first activated by ATP to form Pro-AMP and then transferred to the acceptor end of tRNA(Pro). In Thermoplasma volcanium (strain ATCC 51530 / DSM 4299 / JCM 9571 / NBRC 15438 / GSS1), this protein is Proline--tRNA ligase.